The following is a 913-amino-acid chain: Tyrosine-protein phosphatase non-receptor type 3 (913 aa).

An FERM domain is found at 29-312 (VICSIRFLDG…EHHSFFQAKK (284 aa)). Phosphoserine is present on residues S357, S359, and S367. 2 disordered regions span residues 364–400 (ETKS…DNLA) and 417–473 (KGPL…PDGV). T376 carries the post-translational modification Phosphothreonine. Residue S381 is modified to Phosphoserine. Basic residues predominate over residues 382 to 393 (PRLRHEIRKPRH). Position 425 is a phosphoserine (S425). A compositionally biased stretch (polar residues) spans 441–453 (SENNPAQSCLTQK). Over residues 454–470 (SSSSVSPSSNAPGSCSP) the composition is skewed to low complexity. In terms of domain architecture, PDZ spans 510–582 (LIRITPDEEG…DQVVMFIKAS (73 aa)). Residues 646-901 (VLIQFEQLYR…KFVCEAILRV (256 aa)) enclose the Tyrosine-protein phosphatase domain. Substrate contacts are provided by residues D811, 842 to 848 (CSAGIGR), and Q886. C842 acts as the Phosphocysteine intermediate in catalysis.

It belongs to the protein-tyrosine phosphatase family. Non-receptor class subfamily.

Its subcellular location is the cell membrane. The protein resides in the cytoplasm. It is found in the cytoskeleton. It carries out the reaction O-phospho-L-tyrosyl-[protein] + H2O = L-tyrosyl-[protein] + phosphate. Functionally, may act at junctions between the membrane and the cytoskeleton. This chain is Tyrosine-protein phosphatase non-receptor type 3 (Ptpn3), found in Mus musculus (Mouse).